Here is a 305-residue protein sequence, read N- to C-terminus: MKETDSLTCSDLRPARKAPQTAIGQVLIEALPYIRKFERKTFVIKYGGSAMKDLCLKNSFAQNVTLLRKVGINVVLVHGGGDAITKTAEKLGITSTFVHGKRVTDKEMISVVQMTLAGKVNQDIVQLISEHGGKAVGVTGLDADTIQAVPCRDAATLGLVGEIESINTAYIDLLCKAGLIPVIAPIGFDDDGNIYNINADDAASSIAIALKAEKLIYVSDVAGIQVGERILKTICKAEAADFIEQGIITGGMIPKVLSGFLTLDGGVRKIHIIDGKSVHSLLLEIFTHEGVGTQFISEQDDESNH.

Residues 80 to 81, R102, and N196 contribute to the substrate site; that span reads GG.

This sequence belongs to the acetylglutamate kinase family. ArgB subfamily.

It is found in the cytoplasm. It catalyses the reaction N-acetyl-L-glutamate + ATP = N-acetyl-L-glutamyl 5-phosphate + ADP. The protein operates within amino-acid biosynthesis; L-arginine biosynthesis; N(2)-acetyl-L-ornithine from L-glutamate: step 2/4. Catalyzes the ATP-dependent phosphorylation of N-acetyl-L-glutamate. The sequence is that of Acetylglutamate kinase from Chlorobium luteolum (strain DSM 273 / BCRC 81028 / 2530) (Pelodictyon luteolum).